The following is a 34-amino-acid chain: Photosystem II reaction center protein M (34 aa).

The helical transmembrane segment at 5 to 25 threads the bilayer; sequence ILAFIATALFILVPTSFLLII.

It belongs to the PsbM family. PSII is composed of 1 copy each of membrane proteins PsbA, PsbB, PsbC, PsbD, PsbE, PsbF, PsbH, PsbI, PsbJ, PsbK, PsbL, PsbM, PsbT, PsbX, PsbY, PsbZ, Psb30/Ycf12, at least 3 peripheral proteins of the oxygen-evolving complex and a large number of cofactors. It forms dimeric complexes.

It is found in the plastid. Its subcellular location is the chloroplast thylakoid membrane. Functionally, one of the components of the core complex of photosystem II (PSII). PSII is a light-driven water:plastoquinone oxidoreductase that uses light energy to abstract electrons from H(2)O, generating O(2) and a proton gradient subsequently used for ATP formation. It consists of a core antenna complex that captures photons, and an electron transfer chain that converts photonic excitation into a charge separation. This subunit is found at the monomer-monomer interface. The polypeptide is Photosystem II reaction center protein M (Triticum aestivum (Wheat)).